The sequence spans 144 residues: Large ribosomal subunit protein uL16 (144 aa).

The protein belongs to the universal ribosomal protein uL16 family. Part of the 50S ribosomal subunit.

Functionally, binds 23S rRNA and is also seen to make contacts with the A and possibly P site tRNAs. This Clostridium beijerinckii (strain ATCC 51743 / NCIMB 8052) (Clostridium acetobutylicum) protein is Large ribosomal subunit protein uL16.